Consider the following 466-residue polypeptide: UDP-N-acetylmuramoylalanine--D-glutamate ligase (466 aa).

Residue 139 to 145 (GTAGKGG) participates in ATP binding.

It belongs to the MurCDEF family.

It is found in the cytoplasm. The catalysed reaction is UDP-N-acetyl-alpha-D-muramoyl-L-alanine + D-glutamate + ATP = UDP-N-acetyl-alpha-D-muramoyl-L-alanyl-D-glutamate + ADP + phosphate + H(+). The protein operates within cell wall biogenesis; peptidoglycan biosynthesis. In terms of biological role, cell wall formation. Catalyzes the addition of glutamate to the nucleotide precursor UDP-N-acetylmuramoyl-L-alanine (UMA). In Deinococcus geothermalis (strain DSM 11300 / CIP 105573 / AG-3a), this protein is UDP-N-acetylmuramoylalanine--D-glutamate ligase.